The sequence spans 152 residues: D-aminoacyl-tRNA deacylase (152 aa).

A Gly-cisPro motif, important for rejection of L-amino acids motif is present at residues 137 to 138 (GP).

Belongs to the DTD family. In terms of assembly, homodimer.

The protein localises to the cytoplasm. The enzyme catalyses glycyl-tRNA(Ala) + H2O = tRNA(Ala) + glycine + H(+). The catalysed reaction is a D-aminoacyl-tRNA + H2O = a tRNA + a D-alpha-amino acid + H(+). Functionally, an aminoacyl-tRNA editing enzyme that deacylates mischarged D-aminoacyl-tRNAs. Also deacylates mischarged glycyl-tRNA(Ala), protecting cells against glycine mischarging by AlaRS. Acts via tRNA-based rather than protein-based catalysis; rejects L-amino acids rather than detecting D-amino acids in the active site. By recycling D-aminoacyl-tRNA to D-amino acids and free tRNA molecules, this enzyme counteracts the toxicity associated with the formation of D-aminoacyl-tRNA entities in vivo and helps enforce protein L-homochirality. In Methylibium petroleiphilum (strain ATCC BAA-1232 / LMG 22953 / PM1), this protein is D-aminoacyl-tRNA deacylase.